Consider the following 436-residue polypeptide: MTDRTPPQGRARRLFSRTSWPEARFLADVLRTETFGGGLLLLGAVLALLWANSPWADSYAALASWVPWPGGSDLHLDLDLATWAADGLLAIFFFVVGLELKREFVAGDLRDPRRAALPVVAAIGGMIVPALIYVGINLAAGGENLRGWAIPTATDIAFALAVLAVIGSHLPQGLRAFLLTLAVVDDLLAITVIAIFYTGDFKLTPLLVALLPIALFGLLVQRRKTWWWALIPLAVVAWTLVHESGVHATVAGVLLGFTVPVLRGREGDRHGLAEHLEHRWRPVSAGFAVPVFAFFAAGVSLRGADLGGIVTDPIVVGIVAGLVLGKVLGIFGSTFMLARFTRAELDRDITWTDLLGVSLLAGIGFTVSLLIGELAFEGGTAGDNVKAAVLTGSVIAALLASAVLSRRNKAYRRIAAKERLDSNRDGVPDVFQHRDG.

11 helical membrane passes run 35–55 (FGGG…NSPW), 80–100 (LATW…GLEL), 116–136 (ALPV…YVGI), 147–167 (GWAI…AVIG), 176–196 (AFLL…IAIF), 201–221 (FKLT…LLVQ), 226–246 (WWWA…ESGV), 283–303 (VSAG…SLRG), 313–333 (PIVV…IFGS), 354–374 (LLGV…IGEL), and 385–405 (VKAA…AVLS).

It belongs to the NhaA Na(+)/H(+) (TC 2.A.33) antiporter family.

It is found in the cell membrane. It carries out the reaction Na(+)(in) + 2 H(+)(out) = Na(+)(out) + 2 H(+)(in). Functionally, na(+)/H(+) antiporter that extrudes sodium in exchange for external protons. The sequence is that of Na(+)/H(+) antiporter NhaA 2 from Salinispora arenicola (strain CNS-205).